A 55-amino-acid polypeptide reads, in one-letter code: Large ribosomal subunit protein bL33 (55 aa).

The protein belongs to the bacterial ribosomal protein bL33 family.

The chain is Large ribosomal subunit protein bL33 from Klebsiella pneumoniae (strain 342).